A 216-amino-acid chain; its full sequence is 3-keto-L-gulonate-6-phosphate decarboxylase UlaD (216 aa).

D11 contributes to the substrate binding site. Residues E33 and D62 each contribute to the Mg(2+) site. Residue R192 participates in substrate binding.

This sequence belongs to the HPS/KGPDC family. KGPDC subfamily. As to quaternary structure, homodimer. Mg(2+) serves as cofactor.

The catalysed reaction is 3-dehydro-L-gulonate 6-phosphate + H(+) = L-xylulose 5-phosphate + CO2. Its pathway is cofactor degradation; L-ascorbate degradation; D-xylulose 5-phosphate from L-ascorbate: step 2/4. Functionally, catalyzes the decarboxylation of 3-keto-L-gulonate-6-P into L-xylulose-5-P. Is involved in the anaerobic L-ascorbate utilization. The polypeptide is 3-keto-L-gulonate-6-phosphate decarboxylase UlaD (Escherichia fergusonii (strain ATCC 35469 / DSM 13698 / CCUG 18766 / IAM 14443 / JCM 21226 / LMG 7866 / NBRC 102419 / NCTC 12128 / CDC 0568-73)).